A 271-amino-acid chain; its full sequence is Protein ABHD14A (271 aa).

Residues 35 to 55 (VALLGLSLLLMLLLYVGLPGP) traverse the membrane as a helical; Signal-anchor for type II membrane protein segment. N67 carries N-linked (GlcNAc...) asparagine glycosylation. Residue S171 is the Charge relay system of the active site. Residue N201 is glycosylated (N-linked (GlcNAc...) asparagine). Active-site charge relay system residues include D222 and H249.

The protein belongs to the AB hydrolase superfamily. ABHD14 family.

Its subcellular location is the cytoplasm. The protein resides in the membrane. In terms of biological role, possible role in granule neuron development. This chain is Protein ABHD14A, found in Homo sapiens (Human).